Reading from the N-terminus, the 247-residue chain is Adenosylcobinamide-GDP ribazoletransferase (247 aa).

The next 6 helical transmembrane spans lie at 34–54 (IVTF…VFVA), 59–79 (CGIP…TGGF), 113–133 (GGLA…ELAL), 138–158 (MLAA…LLMY), 171–193 (VFIG…ILAA), and 194–214 (ILMP…AIFI).

This sequence belongs to the CobS family. It depends on Mg(2+) as a cofactor.

The protein resides in the cell inner membrane. It carries out the reaction alpha-ribazole + adenosylcob(III)inamide-GDP = adenosylcob(III)alamin + GMP + H(+). The catalysed reaction is alpha-ribazole 5'-phosphate + adenosylcob(III)inamide-GDP = adenosylcob(III)alamin 5'-phosphate + GMP + H(+). Its pathway is cofactor biosynthesis; adenosylcobalamin biosynthesis; adenosylcobalamin from cob(II)yrinate a,c-diamide: step 7/7. Its function is as follows. Joins adenosylcobinamide-GDP and alpha-ribazole to generate adenosylcobalamin (Ado-cobalamin). Also synthesizes adenosylcobalamin 5'-phosphate from adenosylcobinamide-GDP and alpha-ribazole 5'-phosphate. The sequence is that of Adenosylcobinamide-GDP ribazoletransferase from Citrobacter koseri (strain ATCC BAA-895 / CDC 4225-83 / SGSC4696).